The chain runs to 400 residues: Tryptophan--tRNA ligase, cytoplasmic (400 aa).

Residues 95-104 (PSSGSLHFGH) carry the 'HIGH' region motif. The 'KMSKS' region signature appears at 281–285 (KMSAS).

This sequence belongs to the class-I aminoacyl-tRNA synthetase family.

The protein localises to the cytoplasm. It carries out the reaction tRNA(Trp) + L-tryptophan + ATP = L-tryptophyl-tRNA(Trp) + AMP + diphosphate + H(+). This is Tryptophan--tRNA ligase, cytoplasmic (trpS) from Dictyostelium discoideum (Social amoeba).